Consider the following 561-residue polypeptide: CWF19-like protein mug161 (561 aa).

Residues 286–338 (QQTNKFHKSKSSTALFKSKKDSSSSLNKMHKSESHSALNNLHKSESGTSLNNR) are disordered. Ser-296 carries the phosphoserine modification. Residue Thr-298 is modified to Phosphothreonine. Residues Ser-317, Ser-319, Ser-331, and Ser-334 each carry the phosphoserine modification. The span at 320–337 (HSALNNLHKSESGTSLNN) shows a compositional bias: polar residues.

It belongs to the CWF19 family.

The protein localises to the nucleus. Functionally, has a role in meiosis. The protein is CWF19-like protein mug161 (mug161) of Schizosaccharomyces pombe (strain 972 / ATCC 24843) (Fission yeast).